The chain runs to 117 residues: UPF0342 protein GWCH70_0629 (117 aa).

This sequence belongs to the UPF0342 family.

This is UPF0342 protein GWCH70_0629 from Geobacillus sp. (strain WCH70).